The following is a 348-amino-acid chain: D-alanine--D-alanine ligase (348 aa).

The 203-residue stretch at 132-334 folds into the ATP-grasp domain; that stretch reads KRVLESAGIP…YAELIEELVR (203 aa). Position 162–217 (162–217) interacts with ATP; it reads EAVLSYPVFVKPANMGSSVGISKAESEEELRAAILLALTYDSRILIEQGVLAREIE. The Mg(2+) site is built by D288, E301, and N303.

Belongs to the D-alanine--D-alanine ligase family. Mg(2+) serves as cofactor. Requires Mn(2+) as cofactor.

It localises to the cytoplasm. It catalyses the reaction 2 D-alanine + ATP = D-alanyl-D-alanine + ADP + phosphate + H(+). It functions in the pathway cell wall biogenesis; peptidoglycan biosynthesis. Cell wall formation. The protein is D-alanine--D-alanine ligase of Streptococcus equi subsp. equi (strain 4047).